The sequence spans 392 residues: Formate-dependent phosphoribosylglycinamide formyltransferase (392 aa).

N(1)-(5-phospho-beta-D-ribosyl)glycinamide contacts are provided by residues 22–23 (EL) and Glu82. ATP is bound by residues Arg114, Lys155, 160-165 (SSGKGQ), 195-198 (EGVV), and Glu203. The 190-residue stretch at 119–308 (RLAAEELQLP…EFALHVRAFL (190 aa)) folds into the ATP-grasp domain. Mg(2+)-binding residues include Glu267 and Glu279. N(1)-(5-phospho-beta-D-ribosyl)glycinamide is bound by residues Asp286, Lys355, and 362–363 (RR).

The protein belongs to the PurK/PurT family. As to quaternary structure, homodimer.

It catalyses the reaction N(1)-(5-phospho-beta-D-ribosyl)glycinamide + formate + ATP = N(2)-formyl-N(1)-(5-phospho-beta-D-ribosyl)glycinamide + ADP + phosphate + H(+). Its pathway is purine metabolism; IMP biosynthesis via de novo pathway; N(2)-formyl-N(1)-(5-phospho-D-ribosyl)glycinamide from N(1)-(5-phospho-D-ribosyl)glycinamide (formate route): step 1/1. Functionally, involved in the de novo purine biosynthesis. Catalyzes the transfer of formate to 5-phospho-ribosyl-glycinamide (GAR), producing 5-phospho-ribosyl-N-formylglycinamide (FGAR). Formate is provided by PurU via hydrolysis of 10-formyl-tetrahydrofolate. The chain is Formate-dependent phosphoribosylglycinamide formyltransferase from Shigella sonnei (strain Ss046).